A 146-amino-acid chain; its full sequence is Phospholipase A2 OS2 (146 aa).

Residues 1-27 (MHPAHLLVLLAVCVSLLGASDIPPLPL) form the signal peptide. 7 cysteine pairs are disulfide-bonded: cysteine 38–cysteine 99, cysteine 54–cysteine 145, cysteine 56–cysteine 72, cysteine 71–cysteine 126, cysteine 78–cysteine 119, cysteine 88–cysteine 112, and cysteine 106–cysteine 117. The Ca(2+) site is built by tyrosine 55, glycine 57, and glycine 59. Histidine 75 is a catalytic residue. A Ca(2+)-binding site is contributed by aspartate 76. Residue aspartate 120 is part of the active site.

It belongs to the phospholipase A2 family. Group I subfamily. D49 sub-subfamily. In terms of assembly, monomer. Ca(2+) serves as cofactor. In terms of tissue distribution, expressed by the venom gland.

It is found in the secreted. It catalyses the reaction a 1,2-diacyl-sn-glycero-3-phosphocholine + H2O = a 1-acyl-sn-glycero-3-phosphocholine + a fatty acid + H(+). In terms of biological role, snake venom phospholipase A2 (PLA2) that shows high presynaptic neurotoxicity in vertebrata that is independent of catalytic activity, as well as local myotoxicity when intramuscularly injected into mice. Blocks acetylcholine release in Aplysia neurons, and potentiates pro-inflammatory cellular signaling. Potentiates glutamate excitoxicity when coinjected into brain of rats. May act by binding in a calcium-dependent fashion and with high affinity to a neuronal-type (N-type) PLA2 receptor, and with very high affinity to a muscle-type (M-type) PLA2 receptor. In vitro, shows a high-specific activity on E.coli membranes and is more efficient on the anionic phospholipid POPG than on the anionic phospholipid POPS or the zwitterionic phospholipid POPC. Exerts catalytically-independent anti-HIV (IC(50) is 35 nM) activity and catalytically-dependent antimalarial activity (IC(50) is 3.1 nM when tested on P.falciparum grown in serum that contains lipoproteins). PLA2 catalyzes the calcium-dependent hydrolysis of the 2-acyl groups in 3-sn-phosphoglycerides. This is Phospholipase A2 OS2 from Oxyuranus scutellatus scutellatus (Australian taipan).